A 126-amino-acid chain; its full sequence is Large ribosomal subunit protein bL12 (126 aa).

The protein belongs to the bacterial ribosomal protein bL12 family. As to quaternary structure, homodimer. Part of the ribosomal stalk of the 50S ribosomal subunit. Forms a multimeric L10(L12)X complex, where L10 forms an elongated spine to which 2 to 4 L12 dimers bind in a sequential fashion. Binds GTP-bound translation factors.

Forms part of the ribosomal stalk which helps the ribosome interact with GTP-bound translation factors. Is thus essential for accurate translation. This Chlorobium phaeobacteroides (strain BS1) protein is Large ribosomal subunit protein bL12.